We begin with the raw amino-acid sequence, 380 residues long: Carbonic anhydrase 2 (380 aa).

The signal sequence occupies residues 1–20 (MARTGALLLAALALAGCAQA). Residues 38–322 (DHWDHSLNGE…HHHRRLLHNH (285 aa)) form the Alpha-carbonic anhydrase domain. Cystine bridges form between Cys-61–Cys-264, Cys-194–Cys-198, and Cys-296–Cys-354. Asn-101 carries N-linked (GlcNAc...) asparagine glycosylation. His-112 (proton acceptor) is an active-site residue. N-linked (GlcNAc...) asparagine glycosylation occurs at Asn-135. Zn(2+) contacts are provided by His-163, His-165, and His-182. 260 to 261 (TT) provides a ligand contact to substrate. Residue Asn-297 is glycosylated (N-linked (GlcNAc...) asparagine).

It belongs to the alpha-carbonic anhydrase family. As to quaternary structure, tetramer of two large and two small subunits linked by two disulfide bonds. Requires Zn(2+) as cofactor.

It localises to the periplasm. It carries out the reaction hydrogencarbonate + H(+) = CO2 + H2O. In terms of biological role, reversible hydration of carbon dioxide. This is Carbonic anhydrase 2 (CAH2) from Chlamydomonas reinhardtii (Chlamydomonas smithii).